The following is a 158-amino-acid chain: uncharacterized protein (158 aa).

The protein belongs to the SixA phosphatase family.

This is an uncharacterized protein from Mycobacterium tuberculosis (strain CDC 1551 / Oshkosh).